We begin with the raw amino-acid sequence, 212 residues long: Uracil phosphoribosyltransferase (212 aa).

5-phospho-alpha-D-ribose 1-diphosphate is bound by residues R78, R103, and 130-138 (DPMLATGGS). Uracil is bound by residues I193 and 198-200 (GDA). A 5-phospho-alpha-D-ribose 1-diphosphate-binding site is contributed by D199.

It belongs to the UPRTase family. It depends on Mg(2+) as a cofactor.

The catalysed reaction is UMP + diphosphate = 5-phospho-alpha-D-ribose 1-diphosphate + uracil. It participates in pyrimidine metabolism; UMP biosynthesis via salvage pathway; UMP from uracil: step 1/1. Its activity is regulated as follows. Allosterically activated by GTP. Its function is as follows. Catalyzes the conversion of uracil and 5-phospho-alpha-D-ribose 1-diphosphate (PRPP) to UMP and diphosphate. The sequence is that of Uracil phosphoribosyltransferase from Ectopseudomonas mendocina (strain ymp) (Pseudomonas mendocina).